The sequence spans 393 residues: Stearoyl-[acyl-carrier-protein] 9-desaturase, chloroplastic (393 aa).

Residues 1–30 (MALNINGVSLKSHKMLPFPCSSARSERVFM) constitute a chloroplast transit peptide. Residues glutamate 135, glutamate 173, histidine 176, glutamate 259, and histidine 262 each coordinate Fe cation.

The protein belongs to the fatty acid desaturase type 2 family. In terms of assembly, homodimer. The cofactor is Fe(2+).

Its subcellular location is the plastid. The protein localises to the chloroplast. It carries out the reaction octadecanoyl-[ACP] + 2 reduced [2Fe-2S]-[ferredoxin] + O2 + 2 H(+) = (9Z)-octadecenoyl-[ACP] + 2 oxidized [2Fe-2S]-[ferredoxin] + 2 H2O. The protein operates within lipid metabolism; fatty acid metabolism. In terms of biological role, converts stearoyl-ACP to oleoyl-ACP by introduction of a cis double bond between carbons 9 and 10 of the acyl chain. This Solanum tuberosum (Potato) protein is Stearoyl-[acyl-carrier-protein] 9-desaturase, chloroplastic.